The chain runs to 1880 residues: Gag-Pro-Pol polyprotein (1880 aa).

The N-myristoyl glycine; by host moiety is linked to residue glycine 2. 3 disordered regions span residues 115–208 (HSRP…DQLN), 323–376 (SQGQ…THSY), and 446–469 (AERTRVRPPPKDGPLKIPGASPYQ). 3 stretches are compositionally biased toward polar residues: residues 117 to 132 (RPPSRQAPVTITTSEK), 193 to 206 (NSKTLHNSGSQDDQ), and 323 to 334 (SQGQVSSNTTGR). The segment covering 346-366 (EEEEADSGESDSEDDEEESSE) has biased composition (acidic residues). Residues 446 to 459 (AERTRVRPPPKDGP) show a composition bias toward basic and acidic residues. Positions 863 to 939 (FSGILDTGAD…LPVNLWGRDI (77 aa)) constitute a Peptidase A2 domain. The active-site Protease; shared with dimeric partner is aspartate 868. Residues 950–996 (PNDTVMTQMLSQGYLPGQGLGKNNQGITQPITITPKKDKTGLGFHQN) form the G-patch domain. Positions 1044–1232 (LAAGHIEPTN…EPFSYLGFEL (189 aa)) constitute a Reverse transcriptase domain. Residues aspartate 1109, aspartate 1184, aspartate 1185, aspartate 1464, glutamate 1493, aspartate 1514, and aspartate 1578 each contribute to the Mg(2+) site. An RNase H type-1 domain is found at 1455 to 1586 (IPQATLVFTD…ADAATQIFPI (132 aa)). The Integrase-type zinc finger occupies 1589 to 1630 (DPIHEATQAHTLHHLNAHTLRLLYKITREQARDIVKACKQCV). Zn(2+)-binding residues include histidine 1598, histidine 1602, cysteine 1626, and cysteine 1629. The Integrase catalytic domain maps to 1643–1804 (RGLVPNAIWQ…AADRLWHPQT (162 aa)). Residues aspartate 1654, aspartate 1711, and glutamate 1747 each coordinate Mg(2+). Positions 1809 to 1858 (ATVMWRDPLTSVWKGPDPVLIWGRGSACIYDQKEDGPRWLPERLIRHINN) form a DNA-binding region, integrase-type. Positions 1859–1880 (QTAPLCDRPSNPNTAPGPKGSP) are disordered.

Homodimer. As to quaternary structure, interacts with the G-patch peptide. In terms of assembly, interacts with the reverse transcriptase/ribonuclease H. Homotrimer. Mg(2+) is required as a cofactor. In terms of processing, myristoylated. Myristoylation of the matrix (MA) domain mediates the transport and binding of Gag polyproteins to the host plasma membrane and is required for the assembly of viral particles. Specific enzymatic cleavages in vivo yield mature proteins. Post-translationally, released by autocatalytic processing. The protease can undergo further autoprocessing to yield 2 shorter but enzymatically active forms of 12 kDa and 13 kDa.

The protein resides in the virion. It catalyses the reaction DNA(n) + a 2'-deoxyribonucleoside 5'-triphosphate = DNA(n+1) + diphosphate. It carries out the reaction Endonucleolytic cleavage to 5'-phosphomonoester.. The enzyme catalyses dUTP + H2O = dUMP + diphosphate + H(+). Its function is as follows. Matrix protein. Functionally, capsid protein. Matrix protein p10: Matrix protein. In terms of biological role, nucleocapsid protein p14: Nucleocapsid protein. Its function is as follows. Capsid protein p27: capsid protein. Functionally, the aspartyl protease mediates proteolytic cleavages of Gag and Gag-Pol polyproteins during or shortly after the release of the virion from the plasma membrane. Cleavages take place as an ordered, step-wise cascade to yield mature proteins. This process is called maturation. Displays maximal activity during the budding process just prior to particle release from the cell. Enhances the activity of the reverse transcriptase. May be part of the mature RT. In terms of biological role, RT is a multifunctional enzyme that converts the viral dimeric RNA genome into dsDNA in the cytoplasm, shortly after virus entry into the cell. This enzyme displays a DNA polymerase activity that can copy either DNA or RNA templates, and a ribonuclease H (RNase H) activity that cleaves the RNA strand of RNA-DNA heteroduplexes in a partially processive 3' to 5' endonucleasic mode. Conversion of viral genomic RNA into dsDNA requires many steps. A tRNA binds to the primer-binding site (PBS) situated at the 5' end of the viral RNA. RT uses the 3' end of the tRNA primer to perfom a short round of RNA-dependent minus-strand DNA synthesis. The reading proceeds through the U5 region and ends after the repeated (R) region which is present at both ends of viral RNA. The portion of the RNA-DNA heteroduplex is digested by the RNase H, resulting in a ssDNA product attached to the tRNA primer. This ssDNA/tRNA hybridizes with the identical R region situated at the 3' end of viral RNA. This template exchange, known as minus-strand DNA strong stop transfer, can be either intra- or intermolecular. RT uses the 3' end of this newly synthesized short ssDNA to perfom the RNA-dependent minus-strand DNA synthesis of the whole template. RNase H digests the RNA template except for a polypurine tract (PPT) situated at the 5' end of the genome. It is not clear if both polymerase and RNase H activities are simultaneous. RNase H probably can proceed both in a polymerase-dependent (RNA cut into small fragments by the same RT performing DNA synthesis) and a polymerase-independent mode (cleavage of remaining RNA fragments by free RTs). Secondly, RT performs DNA-directed plus-strand DNA synthesis using the PPT that has not been removed by RNase H as primers. PPT and tRNA primers are then removed by RNase H. The 3' and 5' ssDNA PBS regions hybridize to form a circular dsDNA intermediate. Strand displacement synthesis by RT to the PBS and PPT ends produces a blunt ended, linear dsDNA copy of the viral genome that includes long terminal repeats (LTRs) at both ends. Its function is as follows. Catalyzes viral DNA integration into the host chromosome, by performing a series of DNA cutting and joining reactions. This chain is Gag-Pro-Pol polyprotein (pol), found in Mammalia (SMRV-H).